A 340-amino-acid polypeptide reads, in one-letter code: N-acetyl-gamma-glutamyl-phosphate reductase (340 aa).

Cys-146 is a catalytic residue.

This sequence belongs to the NAGSA dehydrogenase family. Type 1 subfamily.

The protein localises to the cytoplasm. It carries out the reaction N-acetyl-L-glutamate 5-semialdehyde + phosphate + NADP(+) = N-acetyl-L-glutamyl 5-phosphate + NADPH + H(+). It participates in amino-acid biosynthesis; L-arginine biosynthesis; N(2)-acetyl-L-ornithine from L-glutamate: step 3/4. Functionally, catalyzes the NADPH-dependent reduction of N-acetyl-5-glutamyl phosphate to yield N-acetyl-L-glutamate 5-semialdehyde. The sequence is that of N-acetyl-gamma-glutamyl-phosphate reductase from Streptococcus sanguinis (strain SK36).